Consider the following 489-residue polypeptide: MALFIFLGIWLSCFLFLFLWNQHRGRGKLPPGPTPLPIVGNILQVDVKNISKSMGMLAKKYGPVFTVYLGMKPTVVLHGYKAMKEALIDQGDEFSDKTDSSLLSRTSQGLGIVFSNGETWKQTRRFSLMVLRSMGMGKKTIEDRIQEEILYMLDALRKTNGSPCDPSFLLACVPCNVISTVIFQHRFDYNDQTFQDFMENFHRKIEILASPWSQLCSAYPILYYLPGIHNRFLKDVTQQKKFILEEINRHQKSLDLSNPQDFIDYFLIKMEKEKHNQKSEFTMDNLVVSIGDLFGAGTETTSSTVKYGLLLLLKYPEVTAKIQEEIAHVIGRHRRPTMQDRNHMPYTDAVLHEIQRYIDFVPIPSPRKTTQDVEFRGYHIPKGTSVMACLTSVLNDDKEFPNPEKFDPGHFLDEKGNFKKSDYFVAFSAGRRACIGEGLARMEMFLILTNILQHFTLKPLVKPEDIDTKPVQTGLLHVPPPFELCFIPV.

The N-terminal stretch at 1-27 (MALFIFLGIWLSCFLFLFLWNQHRGRG) is a signal peptide. Cys434 serves as a coordination point for heme.

Belongs to the cytochrome P450 family. Heme serves as cofactor. In terms of tissue distribution, expressed in liver.

The protein resides in the endoplasmic reticulum membrane. It localises to the microsome membrane. It catalyses the reaction chenodeoxycholate + reduced [NADPH--hemoprotein reductase] + O2 = alpha-muricholate + oxidized [NADPH--hemoprotein reductase] + H2O + H(+). The catalysed reaction is ursodeoxycholate + reduced [NADPH--hemoprotein reductase] + O2 = beta-muricholate + oxidized [NADPH--hemoprotein reductase] + H2O + H(+). Functionally, a cytochrome P450 monooxygenase involved in muricholic acid (MCA) synthesis. Hydroxylates at the 6-beta position two major bile acids, chenodeoxycholic acid (CDCA) and ursodeoxycholic acid (UDCA) to form alpha-MCA and beta-MCA, respectively. May regulate NR1H4/farnesoid X receptor signaling, as taurine-conjugated MCAs are antagonists of NR1H4. Mechanistically, uses molecular oxygen inserting one oxygen atom into a substrate, and reducing the second into a water molecule, with two electrons provided by NADPH via cytochrome P450 reductase (CPR; NADPH-ferrihemoprotein reductase). This chain is Cytochrome P450 2C70, found in Mus musculus (Mouse).